Consider the following 385-residue polypeptide: Glutamate 5-kinase (385 aa).

Residue lysine 17 participates in ATP binding. Substrate-binding residues include serine 64, aspartate 151, and asparagine 165. 185–186 is a binding site for ATP; that stretch reads SD. A PUA domain is found at 291–367; it reads SGTVRVDAGA…DQIENVLGYS (77 aa).

This sequence belongs to the glutamate 5-kinase family.

The protein localises to the cytoplasm. It catalyses the reaction L-glutamate + ATP = L-glutamyl 5-phosphate + ADP. It participates in amino-acid biosynthesis; L-proline biosynthesis; L-glutamate 5-semialdehyde from L-glutamate: step 1/2. Its function is as follows. Catalyzes the transfer of a phosphate group to glutamate to form L-glutamate 5-phosphate. This Methanosarcina mazei (strain ATCC BAA-159 / DSM 3647 / Goe1 / Go1 / JCM 11833 / OCM 88) (Methanosarcina frisia) protein is Glutamate 5-kinase.